Consider the following 598-residue polypeptide: Aluminum-activated malate transporter 9 (598 aa).

Helical transmembrane passes span 88-108 (IVFS…IFYQ), 117-137 (YSVW…GATL), 144-164 (ALGT…STLF), 170-190 (IFCT…KLYP), 194-214 (AYEY…ISGF), and 227-247 (FLLI…IYPI).

It belongs to the aromatic acid exporter (TC 2.A.85) family. In terms of tissue distribution, expressed in hypocotyls, leaves, roots, flowers, sepals and stamina. In leaves, expressed almost exclusively in mesophyll cells.

The protein resides in the vacuole membrane. With respect to regulation, slow activation by external aluminum. Its function is as follows. Vacuolar malate channel. Has a higher selectivity for malate than for fumarate. Also exhibits a weak chloride conductance. This is Aluminum-activated malate transporter 9 (ALMT9) from Arabidopsis thaliana (Mouse-ear cress).